The following is a 458-amino-acid chain: Tetracycline resistance protein (458 aa).

12 helical membrane-spanning segments follow: residues 12–33 (HNQV…EMVL), 81–100 (LLLF…FVGH), 111–129 (FIQG…VVVA), 140–162 (AFGL…GGMV), 165–185 (YIHW…VPFL), 201–221 (MAGI…TTSY), 223–240 (FSFL…VQHI), 256–276 (VFFV…AGFV), 297–317 (GIIF…GLLV), 324–344 (YVLT…AFFI), 346–365 (AAPW…LSFT), and 432–451 (MLIL…LNVY).

It belongs to the major facilitator superfamily. TCR/Tet family.

Its subcellular location is the cell membrane. Its function is as follows. Resistance to tetracycline by an active tetracycline efflux. This is an energy-dependent process that decreases the accumulation of the antibiotic in whole cells. This protein functions as a metal-tetracycline/H(+) antiporter. The protein is Tetracycline resistance protein (tetB) of Bacillus subtilis (strain 168).